Reading from the N-terminus, the 796-residue chain is Probable phosphoketolase (796 aa).

Belongs to the XFP family. Thiamine diphosphate is required as a cofactor.

The polypeptide is Probable phosphoketolase (Synechococcus elongatus (strain ATCC 33912 / PCC 7942 / FACHB-805) (Anacystis nidulans R2)).